The following is a 354-amino-acid chain: tRNA N6-adenosine threonylcarbamoyltransferase (354 aa).

Fe cation-binding residues include His-111 and His-115. Residues 134–138 (LVSGG), Asp-167, Gly-180, and Asn-279 each bind substrate. Residue Asp-319 participates in Fe cation binding.

It belongs to the KAE1 / TsaD family. Requires Fe(2+) as cofactor.

The protein localises to the cytoplasm. It catalyses the reaction L-threonylcarbamoyladenylate + adenosine(37) in tRNA = N(6)-L-threonylcarbamoyladenosine(37) in tRNA + AMP + H(+). Its function is as follows. Required for the formation of a threonylcarbamoyl group on adenosine at position 37 (t(6)A37) in tRNAs that read codons beginning with adenine. Is involved in the transfer of the threonylcarbamoyl moiety of threonylcarbamoyl-AMP (TC-AMP) to the N6 group of A37, together with TsaE and TsaB. TsaD likely plays a direct catalytic role in this reaction. This is tRNA N6-adenosine threonylcarbamoyltransferase from Neisseria meningitidis serogroup B (strain ATCC BAA-335 / MC58).